Consider the following 195-residue polypeptide: Dephospho-CoA kinase (195 aa).

The region spanning 4–195 (IIGLTGGIAS…EQILDALQRL (192 aa)) is the DPCK domain. 12–17 (ASGKST) provides a ligand contact to ATP.

This sequence belongs to the CoaE family.

It is found in the cytoplasm. The enzyme catalyses 3'-dephospho-CoA + ATP = ADP + CoA + H(+). Its pathway is cofactor biosynthesis; coenzyme A biosynthesis; CoA from (R)-pantothenate: step 5/5. In terms of biological role, catalyzes the phosphorylation of the 3'-hydroxyl group of dephosphocoenzyme A to form coenzyme A. This Streptococcus agalactiae serotype III (strain NEM316) protein is Dephospho-CoA kinase.